The sequence spans 70 residues: MSKVKNLLAKMLQRFGKNSSQADSQRYDSLEEIAQNQANERMLRATQVGLEEHLVICLETEAGSFYWHSQ.

In Drosophila melanogaster (Fruit fly), this protein is Enhancer of split m6 protein.